We begin with the raw amino-acid sequence, 452 residues long: Adenylosuccinate synthetase 2 (452 aa).

GTP contacts are provided by residues 19 to 25 (GDEGKAR) and 47 to 49 (GHT). Catalysis depends on D20, which acts as the Proton acceptor. Residues D20 and G47 each contribute to the Mg(2+) site. Residues 20–23 (DEGK), 45–48 (NAGH), T131, R145, Q223, T238, and R338 contribute to the IMP site. H48 (proton donor) is an active-site residue. Residue 334-340 (TGTGRPR) coordinates substrate. Residues R340, 366–368 (KCD), and 437–439 (GLG) each bind GTP.

Belongs to the adenylosuccinate synthetase family. Homodimer. The cofactor is Mg(2+).

It is found in the cytoplasm. The enzyme catalyses IMP + L-aspartate + GTP = N(6)-(1,2-dicarboxyethyl)-AMP + GDP + phosphate + 2 H(+). It participates in purine metabolism; AMP biosynthesis via de novo pathway; AMP from IMP: step 1/2. Functionally, plays an important role in the de novo pathway of purine nucleotide biosynthesis. Catalyzes the first committed step in the biosynthesis of AMP from IMP. This is Adenylosuccinate synthetase 2 from Cupriavidus pinatubonensis (strain JMP 134 / LMG 1197) (Cupriavidus necator (strain JMP 134)).